The following is a 224-amino-acid chain: UPF0758 protein PSPA7_6095 (224 aa).

The 123-residue stretch at 102 to 224 folds into the MPN domain; that stretch reads VLESPQAVRD…PLSLAEYGWM (123 aa). Positions 173, 175, and 186 each coordinate Zn(2+). Positions 173–186 match the JAMM motif motif; sequence HNHPSGDARPSLAD.

This sequence belongs to the UPF0758 family.

The polypeptide is UPF0758 protein PSPA7_6095 (Pseudomonas paraeruginosa (strain DSM 24068 / PA7) (Pseudomonas aeruginosa (strain PA7))).